The sequence spans 201 residues: Urease accessory protein UreG (201 aa).

Residue 11–18 (GPVGSGKT) coordinates GTP.

It belongs to the SIMIBI class G3E GTPase family. UreG subfamily. In terms of assembly, homodimer. UreD, UreF and UreG form a complex that acts as a GTP-hydrolysis-dependent molecular chaperone, activating the urease apoprotein by helping to assemble the nickel containing metallocenter of UreC. The UreE protein probably delivers the nickel.

The protein localises to the cytoplasm. Functionally, facilitates the functional incorporation of the urease nickel metallocenter. This process requires GTP hydrolysis, probably effectuated by UreG. This is Urease accessory protein UreG from Synechococcus sp. (strain CC9605).